The primary structure comprises 256 residues: Pimeloyl-[acyl-carrier protein] methyl ester esterase (256 aa).

Residues 15–242 enclose the AB hydrolase-1 domain; the sequence is HLVLLHGWGL…AAHAPFISHP (228 aa). Substrate contacts are provided by residues Trp-22, 82–83, and 143–147; these read SL and FLALQ. The active-site Nucleophile is the Ser-82. Residues Asp-207 and His-235 contribute to the active site. His-235 contributes to the substrate binding site.

The protein belongs to the AB hydrolase superfamily. Carboxylesterase BioH family. Monomer.

The protein localises to the cytoplasm. The catalysed reaction is 6-carboxyhexanoyl-[ACP] methyl ester + H2O = 6-carboxyhexanoyl-[ACP] + methanol + H(+). The protein operates within cofactor biosynthesis; biotin biosynthesis. The physiological role of BioH is to remove the methyl group introduced by BioC when the pimeloyl moiety is complete. It allows to synthesize pimeloyl-ACP via the fatty acid synthetic pathway through the hydrolysis of the ester bonds of pimeloyl-ACP esters. The polypeptide is Pimeloyl-[acyl-carrier protein] methyl ester esterase (Escherichia coli O17:K52:H18 (strain UMN026 / ExPEC)).